Here is a 258-residue protein sequence, read N- to C-terminus: NAD-capped RNA hydrolase NudC (258 aa).

Arg-69 lines the substrate pocket. Zn(2+) contacts are provided by Cys-98 and Cys-101. Substrate is bound at residue Glu-111. Positions 116 and 119 each coordinate Zn(2+). Tyr-124 is a binding site for substrate. The Nudix hydrolase domain maps to 125–248 (PQIAPCIIVA…TVARRLIEDT (124 aa)). Ala-158, Glu-174, and Glu-178 together coordinate a divalent metal cation. A Nudix box motif is present at residues 159–180 (GFVEVGETLEQTVAREVMEESG). A substrate-binding site is contributed by 192 to 199 (QPWPFPMS). Residue Glu-219 participates in a divalent metal cation binding. Position 241 (Ala-241) interacts with substrate.

This sequence belongs to the Nudix hydrolase family. NudC subfamily. Homodimer. Mg(2+) is required as a cofactor. Requires Mn(2+) as cofactor. Zn(2+) serves as cofactor.

The enzyme catalyses a 5'-end NAD(+)-phospho-ribonucleoside in mRNA + H2O = a 5'-end phospho-adenosine-phospho-ribonucleoside in mRNA + beta-nicotinamide D-ribonucleotide + 2 H(+). It catalyses the reaction NAD(+) + H2O = beta-nicotinamide D-ribonucleotide + AMP + 2 H(+). The catalysed reaction is NADH + H2O = reduced beta-nicotinamide D-ribonucleotide + AMP + 2 H(+). Its function is as follows. mRNA decapping enzyme that specifically removes the nicotinamide adenine dinucleotide (NAD) cap from a subset of mRNAs by hydrolyzing the diphosphate linkage to produce nicotinamide mononucleotide (NMN) and 5' monophosphate mRNA. The NAD-cap is present at the 5'-end of some mRNAs and stabilizes RNA against 5'-processing. Has preference for mRNAs with a 5'-end purine. Catalyzes the hydrolysis of a broad range of dinucleotide pyrophosphates. This is NAD-capped RNA hydrolase NudC from Enterobacter sp. (strain 638).